Reading from the N-terminus, the 326-residue chain is MSNNASPQAAYVPAVKPVSKSSKTTFHFGAGLLSGLTSSILLQPADLLKTRVQQSAHPSSVFSTVKAILSSPNPVRNLWRGTLPSALRTGFGSALYFTSLNALRTSLASTSLTNYDADVKKIGNGSSALPKLSHSANLATGAAARVAAGFVMMPVTVLKVRYESDYYAYRSLYSAGRDIVRTEGVRGLFSGFGATAARDAPYAGLYVLFYEQLKRYLSATTSSTELPSSSSINFVSGGLAAGLATAITNPFDAVKTRLQLMPGKYGNMIRAVRLMVREDGVRSLFGGLGLRIGRKALSSALAWTVYEELILRAEMKWARDEAEARL.

Solcar repeat units follow at residues 22 to 106 (SKTT…LRTS), 135 to 216 (SANL…LKRY), and 228 to 312 (SSSS…LILR). 6 helical membrane-spanning segments follow: residues 28-53 (FGAG…TRVQ), 81-107 (GTLP…RTSL), 138-163 (LATG…VRYE), 191-214 (GFGA…EQLK), 232-258 (INFV…KTRL), and 287-305 (GLGL…AWTV).

Belongs to the mitochondrial carrier (TC 2.A.29) family. SLC25A38 subfamily.

It localises to the mitochondrion inner membrane. It catalyses the reaction glycine(in) = glycine(out). Mitochondrial glycine transporter that imports glycine into the mitochondrial matrix. Plays an important role in providing glycine for the first enzymatic step in heme biosynthesis, the condensation of glycine with succinyl-CoA to produce 5-aminolevulinate (ALA) in the mitochondrial matrix. This is Mitochondrial glycine transporter from Emericella nidulans (strain FGSC A4 / ATCC 38163 / CBS 112.46 / NRRL 194 / M139) (Aspergillus nidulans).